A 676-amino-acid polypeptide reads, in one-letter code: Methionine--tRNA ligase (676 aa).

Residues 15–25 carry the 'HIGH' region motif; that stretch reads PYANGSIHLGH. Zn(2+) is bound by residues Cys146, Cys149, Cys159, and Cys162. The 'KMSKS' region motif lies at 332-336; sequence KMSKS. Lys335 is a binding site for ATP. The region spanning 574 to 676 is the tRNA-binding domain; the sequence is DFAKVDMRIA…SGAQPGMQVK (103 aa).

It belongs to the class-I aminoacyl-tRNA synthetase family. MetG type 1 subfamily. Homodimer. Zn(2+) is required as a cofactor.

The protein resides in the cytoplasm. It carries out the reaction tRNA(Met) + L-methionine + ATP = L-methionyl-tRNA(Met) + AMP + diphosphate. Its function is as follows. Is required not only for elongation of protein synthesis but also for the initiation of all mRNA translation through initiator tRNA(fMet) aminoacylation. This chain is Methionine--tRNA ligase, found in Pectobacterium atrosepticum (strain SCRI 1043 / ATCC BAA-672) (Erwinia carotovora subsp. atroseptica).